We begin with the raw amino-acid sequence, 878 residues long: Leucine--tRNA ligase (878 aa).

Positions 43-54 (PYPSAQGLHVGH) match the 'HIGH' region motif. Positions 634-638 (KMSKA) match the 'KMSKS' region motif. ATP is bound at residue Lys637.

This sequence belongs to the class-I aminoacyl-tRNA synthetase family.

Its subcellular location is the cytoplasm. The enzyme catalyses tRNA(Leu) + L-leucine + ATP = L-leucyl-tRNA(Leu) + AMP + diphosphate. The polypeptide is Leucine--tRNA ligase (Treponema pallidum subsp. pallidum (strain SS14)).